The sequence spans 359 residues: 3-dehydroquinate synthase (359 aa).

It belongs to the archaeal-type DHQ synthase family.

The catalysed reaction is 2-amino-2,3,7-trideoxy-D-lyxo-hept-6-ulosonate + NAD(+) + H2O = 3-dehydroquinate + NH4(+) + NADH + H(+). Its function is as follows. Catalyzes the oxidative deamination and cyclization of 2-amino-3,7-dideoxy-D-threo-hept-6-ulosonic acid (ADH) to yield 3-dehydroquinate (DHQ), which is fed into the canonical shikimic pathway of aromatic amino acid biosynthesis. The polypeptide is 3-dehydroquinate synthase (Methanosphaera stadtmanae (strain ATCC 43021 / DSM 3091 / JCM 11832 / MCB-3)).